The primary structure comprises 369 residues: Cyclic AMP receptor-like protein A (369 aa).

The Extracellular portion of the chain corresponds to 1–4 (MIQI). The helical transmembrane segment at 5–22 (LLSTFISFIIIIVSSNDI) threads the bilayer. Residues 23-72 (RSGENDNFNNNKMINNFLTTITTNDTIIIKETESPNDYDFSKEQIESLDK) lie on the Cytoplasmic side of the membrane. Residues 73 to 93 (IVYFSSTMGIVGALFIIVSFF) form a helical membrane-spanning segment. Residues 94–100 (LFKAART) are Extracellular-facing. Residues 101 to 121 (FATKMIFFLSLSDLFAAIFYL) traverse the membrane as a helical segment. Over 122–146 (PYYRDSDIMCNLQGMGLVFFLSSSY) the chain is Cytoplasmic. A helical membrane pass occupies residues 147–167 (LWTMCISISLFMVFFTTIFEL). The Extracellular segment spans residues 168–173 (NHWFKY). The chain crosses the membrane as a helical span at residues 174–194 (FHFICWGIPLFTAIISLIFHA). Residues 195-212 (YGKTGSWCFISDPTSIFR) lie on the Cytoplasmic side of the membrane. The chain crosses the membrane as a helical span at residues 213–233 (LLYYLPLIVVFFINLVVFIAI). The Extracellular portion of the chain corresponds to 234-247 (RWKISQHSNSLVSR). A helical membrane pass occupies residues 248–268 (VNIIVSFYLIAFSLSQLPTII). Residues 269-369 (NSIQNFSDPD…KLIIDDYNRV (101 aa)) are Cytoplasmic-facing.

It belongs to the G-protein coupled receptor 5 family.

The protein resides in the membrane. In terms of biological role, receptor for cAMP which may play a role in prestalk cell differentiation. May act as a negative regulator of cell growth. The chain is Cyclic AMP receptor-like protein A (crlA) from Dictyostelium discoideum (Social amoeba).